A 185-amino-acid polypeptide reads, in one-letter code: Ribosome maturation factor RimM (185 aa).

The PRC barrel domain maps to 106–185 (EGDYYWKDLM…SIEVDWDPGF (80 aa)).

Belongs to the RimM family. Binds ribosomal protein uS19.

It is found in the cytoplasm. An accessory protein needed during the final step in the assembly of 30S ribosomal subunit, possibly for assembly of the head region. Essential for efficient processing of 16S rRNA. May be needed both before and after RbfA during the maturation of 16S rRNA. It has affinity for free ribosomal 30S subunits but not for 70S ribosomes. In Shigella dysenteriae serotype 1 (strain Sd197), this protein is Ribosome maturation factor RimM.